The following is a 20-amino-acid chain: IIDYYDEGEEDRDVGVVDAR.

A compositionally biased stretch (acidic residues) spans 1–12; the sequence is IIDYYDEGEEDR. The disordered stretch occupies residues 1–20; sequence IIDYYDEGEEDRDVGVVDAR.

In terms of assembly, heterohexamer; disulfide linked. Contains 2 sets of 3 non-identical chains (alpha, beta and gamma). The 2 heterotrimers are in head to head conformation with the N-termini in a small central domain. In terms of processing, conversion of fibrinogen to fibrin is triggered by thrombin, which cleaves fibrinopeptides A and B from alpha and beta chains, and thus exposes the N-terminal polymerization sites responsible for the formation of the soft clot.

It localises to the secreted. Its function is as follows. Cleaved by the protease thrombin to yield monomers which, together with fibrinogen alpha (FGA) and fibrinogen gamma (FGG), polymerize to form an insoluble fibrin matrix. Fibrin has a major function in hemostasis as one of the primary components of blood clots. In addition, functions during the early stages of wound repair to stabilize the lesion and guide cell migration during re-epithelialization. Was originally thought to be essential for platelet aggregation, based on in vitro studies using anticoagulated blood. However subsequent studies have shown that it is not absolutely required for thrombus formation in vivo. Enhances expression of SELP in activated platelets. Maternal fibrinogen is essential for successful pregnancy. Fibrin deposition is also associated with infection, where it protects against IFNG-mediated hemorrhage. May also facilitate the antibacterial immune response via both innate and T-cell mediated pathways. This is Fibrinogen beta chain (FGB) from Felis catus (Cat).